Here is a 57-residue protein sequence, read N- to C-terminus: Large ribosomal subunit protein uL30 (57 aa).

This sequence belongs to the universal ribosomal protein uL30 family. As to quaternary structure, part of the 50S ribosomal subunit.

The chain is Large ribosomal subunit protein uL30 from Clostridium perfringens (strain ATCC 13124 / DSM 756 / JCM 1290 / NCIMB 6125 / NCTC 8237 / Type A).